We begin with the raw amino-acid sequence, 199 residues long: Elongation factor Ts (199 aa).

Residues 81-84 (TDFV) form an involved in Mg(2+) ion dislocation from EF-Tu region.

This sequence belongs to the EF-Ts family.

Its subcellular location is the cytoplasm. Its function is as follows. Associates with the EF-Tu.GDP complex and induces the exchange of GDP to GTP. It remains bound to the aminoacyl-tRNA.EF-Tu.GTP complex up to the GTP hydrolysis stage on the ribosome. This is Elongation factor Ts from Thermotoga petrophila (strain ATCC BAA-488 / DSM 13995 / JCM 10881 / RKU-1).